Consider the following 128-residue polypeptide: Small ribosomal subunit protein uS9 (128 aa).

The tract at residues 105–128 is disordered; that stretch reads DPRSVERKKPGQPKARRRFQFSKR. The segment covering 114-128 has biased composition (basic residues); sequence PGQPKARRRFQFSKR.

The protein belongs to the universal ribosomal protein uS9 family.

This chain is Small ribosomal subunit protein uS9, found in Bacteroides thetaiotaomicron (strain ATCC 29148 / DSM 2079 / JCM 5827 / CCUG 10774 / NCTC 10582 / VPI-5482 / E50).